The chain runs to 278 residues: HTH-type transcriptional activator RhaS (278 aa).

The 99-residue stretch at 174–272 (NLLLAWLEDH…NWSPRDIRQG (99 aa)) folds into the HTH araC/xylS-type domain. DNA-binding regions (H-T-H motif) lie at residues 191–212 (DAVA…KQQT) and 239–262 (VTDI…RREF).

As to quaternary structure, binds DNA as a dimer.

The protein localises to the cytoplasm. Activates expression of the rhaBAD and rhaT operons. This chain is HTH-type transcriptional activator RhaS, found in Shigella boydii serotype 4 (strain Sb227).